The sequence spans 24 residues: Brevinin-1Ecb (24 aa).

Cysteines 18 and 24 form a disulfide.

In terms of tissue distribution, expressed by the skin glands.

Its subcellular location is the secreted. Shows antibacterial activity against representative Gram-negative and Gram-positive bacterial species, and hemolytic activity. In Pelophylax ridibundus (Marsh frog), this protein is Brevinin-1Ecb.